Reading from the N-terminus, the 179-residue chain is Natural killer cells antigen CD94 (179 aa).

Topologically, residues 1–10 (MAVFKTTLWR) are cytoplasmic. A helical; Signal-anchor for type II membrane protein membrane pass occupies residues 11-31 (LISGTLGIICLSLMATLGILL). Residues 32-179 (KNSFTKLSIE…NRYICKQQLI (148 aa)) are Extracellular-facing. 2 disulfides stabilise this stretch: C58–C70 and C61–C72. The 108-residue stretch at 68–175 (YRCNCYFISS…CEDKNRYICK (108 aa)) folds into the C-type lectin domain. Residues N83 and N132 are each glycosylated (N-linked (GlcNAc...) asparagine). 2 disulfides stabilise this stretch: C89-C174 and C152-C166.

In terms of assembly, can form disulfide-bonded heterodimer with NKG2 family members KLRC1 and KLRC2. KLRD1-KLRC1 heterodimer interacts with peptide-bound MHC-E-B2M heterotrimeric complex. KLRD1 plays a prominent role in directly interacting with MHC-E. KLRD1-KLRC1 interacts with much higher affinity with peptide-bound MHC-E-B2M than KLRD1-KLRC2. Interacts with the adapter protein TYROBP/DAP12; this interaction is required for cell surface expression and cell activation. In terms of tissue distribution, natural killer cells.

Its subcellular location is the cell membrane. In terms of biological role, immune receptor involved in self-nonself discrimination. In complex with KLRC1 or KLRC2 on cytotoxic and regulatory lymphocyte subsets, recognizes non-classical major histocompatibility (MHC) class Ib molecule MHC-E loaded with self-peptides derived from the signal sequence of classical MHC class Ia and non-classical MHC class Ib molecules. Enables cytotoxic cells to monitor the expression of MHC class I molecules in healthy cells and to tolerate self. Primarily functions as a ligand binding subunit as it lacks the capacity to signal. Its function is as follows. KLRD1-KLRC1 acts as an immune inhibitory receptor. Key inhibitory receptor on natural killer (NK) cells that regulates their activation and effector functions. Dominantly counteracts T cell receptor signaling on a subset of memory/effector CD8-positive T cells as part of an antigen-driven response to avoid autoimmunity. On intraepithelial CD8-positive gamma-delta regulatory T cells triggers TGFB1 secretion, which in turn limits the cytotoxic programming of intraepithelial CD8-positive alpha-beta T cells, distinguishing harmless from pathogenic antigens. In MHC-E-rich tumor microenvironment, acts as an immune inhibitory checkpoint and may contribute to progressive loss of effector functions of NK cells and tumor-specific T cells, a state known as cell exhaustion. Upon MHC-E-peptide binding, transmits intracellular signals through KLRC1 immunoreceptor tyrosine-based inhibition motifs (ITIMs) by recruiting INPP5D/SHIP-1 and INPPL1/SHIP-2 tyrosine phosphatases to ITIMs, and ultimately opposing signals transmitted by activating receptors through dephosphorylation of proximal signaling molecules. KLRD1-KLRC2 acts as an immune activating receptor. On cytotoxic lymphocyte subsets recognizes MHC-E loaded with signal sequence-derived peptides from non-classical MHC class Ib MHC-G molecules, likely playing a role in the generation and effector functions of adaptive NK cells and in maternal-fetal tolerance during pregnancy. Regulates the effector functions of terminally differentiated cytotoxic lymphocyte subsets, and in particular may play a role in adaptive NK cell response to viral infection. Upon MHC-E-peptide binding, transmits intracellular signals via the adapter protein TYROBP/DAP12, triggering the phosphorylation of proximal signaling molecules and cell activation. This chain is Natural killer cells antigen CD94 (KLRD1), found in Pan troglodytes (Chimpanzee).